Here is a 234-residue protein sequence, read N- to C-terminus: Phosphoribosylaminoimidazole-succinocarboxamide synthase (234 aa).

The protein belongs to the SAICAR synthetase family.

It catalyses the reaction 5-amino-1-(5-phospho-D-ribosyl)imidazole-4-carboxylate + L-aspartate + ATP = (2S)-2-[5-amino-1-(5-phospho-beta-D-ribosyl)imidazole-4-carboxamido]succinate + ADP + phosphate + 2 H(+). It participates in purine metabolism; IMP biosynthesis via de novo pathway; 5-amino-1-(5-phospho-D-ribosyl)imidazole-4-carboxamide from 5-amino-1-(5-phospho-D-ribosyl)imidazole-4-carboxylate: step 1/2. This Staphylococcus carnosus (strain TM300) protein is Phosphoribosylaminoimidazole-succinocarboxamide synthase.